A 41-amino-acid polypeptide reads, in one-letter code: Tachystatin-C (41 aa).

3 disulfide bridges follow: cysteine 12-cysteine 28, cysteine 19-cysteine 33, and cysteine 27-cysteine 38.

In terms of tissue distribution, granular hemocytes, small secretory granules.

The protein localises to the secreted. Its function is as follows. Binds to chitin. Shows strong activity against E.coli (IC(50) is 1.2 ug/ml). Is also very active against S.aureus (IC(50) is 0.8 ug/ml), C.albicans (IC(50) is 0.9 ug/ml) and P.pastoris (IC(50) is 0.3 ug/ml). Binds to chitin (5.2 uM are required to obtain 50% of binding). Causes hemolysis on sheep erythrocytes, probably by forming ion-permeable pores. The sequence is that of Tachystatin-C from Tachypleus tridentatus (Japanese horseshoe crab).